Consider the following 271-residue polypeptide: Malonyl-[acyl-carrier protein] O-methyltransferase (271 aa).

The protein belongs to the methyltransferase superfamily.

It catalyses the reaction malonyl-[ACP] + S-adenosyl-L-methionine = malonyl-[ACP] methyl ester + S-adenosyl-L-homocysteine. Its pathway is cofactor biosynthesis; biotin biosynthesis. Its function is as follows. Converts the free carboxyl group of a malonyl-thioester to its methyl ester by transfer of a methyl group from S-adenosyl-L-methionine (SAM). It allows to synthesize pimeloyl-ACP via the fatty acid synthetic pathway. The polypeptide is Malonyl-[acyl-carrier protein] O-methyltransferase (Halalkalibacterium halodurans (strain ATCC BAA-125 / DSM 18197 / FERM 7344 / JCM 9153 / C-125) (Bacillus halodurans)).